Consider the following 484-residue polypeptide: Probable glycine dehydrogenase (decarboxylating) subunit 2 (484 aa).

The residue at position 264 (Lys-264) is an N6-(pyridoxal phosphate)lysine.

Belongs to the GcvP family. C-terminal subunit subfamily. In terms of assembly, the glycine cleavage system is composed of four proteins: P, T, L and H. In this organism, the P 'protein' is a heterodimer of two subunits. Pyridoxal 5'-phosphate serves as cofactor.

It carries out the reaction N(6)-[(R)-lipoyl]-L-lysyl-[glycine-cleavage complex H protein] + glycine + H(+) = N(6)-[(R)-S(8)-aminomethyldihydrolipoyl]-L-lysyl-[glycine-cleavage complex H protein] + CO2. Its function is as follows. The glycine cleavage system catalyzes the degradation of glycine. The P protein binds the alpha-amino group of glycine through its pyridoxal phosphate cofactor; CO(2) is released and the remaining methylamine moiety is then transferred to the lipoamide cofactor of the H protein. The protein is Probable glycine dehydrogenase (decarboxylating) subunit 2 of Legionella pneumophila (strain Corby).